The primary structure comprises 634 residues: Chaperone protein HtpG (634 aa).

Residues Met1–Arg344 form an a; substrate-binding region. The tract at residues Glu345–Lys561 is b. The interval Leu562 to Val634 is c.

Belongs to the heat shock protein 90 family. As to quaternary structure, homodimer.

The protein localises to the cytoplasm. Functionally, molecular chaperone. Has ATPase activity. The sequence is that of Chaperone protein HtpG from Vibrio campbellii (strain ATCC BAA-1116).